The primary structure comprises 509 residues: Maturase K (509 aa).

This sequence belongs to the intron maturase 2 family. MatK subfamily.

It localises to the plastid. Functionally, usually encoded in the trnK tRNA gene intron. Probably assists in splicing its own and other chloroplast group II introns. The chain is Maturase K from Castilleja linariifolia (Wyoming Indian paintbrush).